The following is a 295-amino-acid chain: Sulfotransferase 1E1 (295 aa).

48–53 contributes to the 3'-phosphoadenylyl sulfate binding site; the sequence is KSGTTW. A substrate-binding site is contributed by 106 to 108; sequence KTH. Catalysis depends on H108, which acts as the Proton acceptor. 3'-phosphoadenylyl sulfate is bound by residues R130 and S138. S156 carries the phosphoserine modification. 3'-phosphoadenylyl sulfate is bound by residues Y193, 227-232, and 257-259; these read TSFQEM and RKG.

This sequence belongs to the sulfotransferase 1 family. In terms of assembly, homodimer. Testis and at very low level in the placenta.

Its subcellular location is the cytoplasm. It is found in the cytosol. It catalyses the reaction estrone + 3'-phosphoadenylyl sulfate = estrone 3-sulfate + adenosine 3',5'-bisphosphate + H(+). It carries out the reaction 17beta-estradiol + 3'-phosphoadenylyl sulfate = 17beta-estradiol 3-sulfate + adenosine 3',5'-bisphosphate + H(+). The enzyme catalyses (24S)-hydroxycholesterol + 3'-phosphoadenylyl sulfate = (24S)-hydroxycholesterol 3-sulfate + adenosine 3',5'-bisphosphate + H(+). The catalysed reaction is 3beta-hydroxyandrost-5-en-17-one + 3'-phosphoadenylyl sulfate = dehydroepiandrosterone 3-sulfate + adenosine 3',5'-bisphosphate + H(+). It catalyses the reaction 4-ethylphenol + 3'-phosphoadenylyl sulfate = 4-ethylphenyl sulfate + adenosine 3',5'-bisphosphate + H(+). With respect to regulation, inhibited by estradiol. Functionally, sulfotransferase that utilizes 3'-phospho-5'-adenylyl sulfate (PAPS) as sulfonate donor to catalyze the sulfate conjugation of estradiol and estrone. Is a key enzyme in estrogen homeostasis, the sulfation of estrogens leads to their inactivation. Also sulfates dehydroepiandrosterone, pregnenolone, (24S)-hydroxycholesterol and xenobiotic compounds like ethinylestradiol, equalenin, diethyl stilbesterol and 1-naphthol at significantly lower efficiency. Does not sulfonate cortisol, testosterone and dopamine. May play a role in gut microbiota-host metabolic interaction. O-sulfonates 4-ethylphenol (4-EP), a dietary tyrosine-derived metabolite produced by gut bacteria. The product 4-EPS crosses the blood-brain barrier and may negatively regulate oligodendrocyte maturation and myelination, affecting the functional connectivity of different brain regions associated with the limbic system. The sequence is that of Sulfotransferase 1E1 (Sult1e1) from Mus musculus (Mouse).